Here is a 146-residue protein sequence, read N- to C-terminus: Late protein OPG112 (146 aa).

Residues 10–31 (LAMTAFFGELNTLDIMALIMSI) form a helical membrane-spanning segment.

The protein belongs to the orthopoxvirus OPG112 family.

Its subcellular location is the host membrane. The protein localises to the host cytoplasm. Functionally, contributes to the formation of crescents and immature virions (IV). Interacts with phosphatidylinositol-3-phosphate (PI3P) and phosphatidylinositol-4-phosphate (PI4P) lipids in order to form virion membranes. Mechanistically, mediates proper formation of OPG125-hexamers, and hence the honey comb lattice and spherical immature virus. The chain is Late protein OPG112 (OPG112) from Cynomys gunnisoni (Gunnison's prairie dog).